A 135-amino-acid polypeptide reads, in one-letter code: M-zodatoxin-Lt8q (135 aa).

Positions 1-20 (MKYFVVALALVAAFACIAES) are cleaved as a signal peptide. A propeptide spanning residues 21-60 (KPAESEHELAEVEEENELADLEDAVWLEHLADLSDLEEAR) is cleaved from the precursor.

The protein belongs to the cationic peptide 06 (cytoinsectotoxin) family. In terms of tissue distribution, expressed by the venom gland.

It is found in the secreted. Its function is as follows. Insecticidal, cytolytic and antimicrobial peptide. Forms voltage-dependent, ion-permeable channels in membranes. At high concentration causes cell membrane lysis. This chain is M-zodatoxin-Lt8q (cit 1-16), found in Lachesana tarabaevi (Spider).